A 32-amino-acid chain; its full sequence is Cytochrome b6-f complex subunit 7 (32 aa).

The helical transmembrane segment at 9-27 (AAVFWVLIPVGLLGGVLLL) threads the bilayer.

It belongs to the PetM family. In terms of assembly, the 4 large subunits of the cytochrome b6-f complex are cytochrome b6, subunit IV (17 kDa polypeptide, PetD), cytochrome f and the Rieske protein, while the 4 small subunits are PetG, PetL, PetM and PetN. The complex functions as a dimer.

The protein localises to the cellular thylakoid membrane. Component of the cytochrome b6-f complex, which mediates electron transfer between photosystem II (PSII) and photosystem I (PSI), cyclic electron flow around PSI, and state transitions. The chain is Cytochrome b6-f complex subunit 7 from Prochlorococcus marinus (strain NATL1A).